Reading from the N-terminus, the 406-residue chain is Acetylornithine/succinyldiaminopimelate aminotransferase (406 aa).

Pyridoxal 5'-phosphate is bound by residues 108–109 (GT) and F141. Position 144 (R144) interacts with N(2)-acetyl-L-ornithine. 226 to 229 (DEVQ) serves as a coordination point for pyridoxal 5'-phosphate. Position 255 is an N6-(pyridoxal phosphate)lysine (K255). S283 is a N(2)-acetyl-L-ornithine binding site. A pyridoxal 5'-phosphate-binding site is contributed by T284.

Belongs to the class-III pyridoxal-phosphate-dependent aminotransferase family. ArgD subfamily. In terms of assembly, homodimer. The cofactor is pyridoxal 5'-phosphate.

The protein resides in the cytoplasm. The catalysed reaction is N(2)-acetyl-L-ornithine + 2-oxoglutarate = N-acetyl-L-glutamate 5-semialdehyde + L-glutamate. It carries out the reaction N-succinyl-(2S,6S)-2,6-diaminopimelate + 2-oxoglutarate = (S)-2-succinylamino-6-oxoheptanedioate + L-glutamate. The protein operates within amino-acid biosynthesis; L-arginine biosynthesis; N(2)-acetyl-L-ornithine from L-glutamate: step 4/4. Its pathway is amino-acid biosynthesis; L-lysine biosynthesis via DAP pathway; LL-2,6-diaminopimelate from (S)-tetrahydrodipicolinate (succinylase route): step 2/3. Involved in both the arginine and lysine biosynthetic pathways. The sequence is that of Acetylornithine/succinyldiaminopimelate aminotransferase from Escherichia coli O157:H7.